Consider the following 449-residue polypeptide: Na(+)/H(+) antiporter NhaA (449 aa).

12 helical membrane-spanning segments follow: residues 30 to 50, 69 to 89, 112 to 132, 138 to 158, 168 to 188, 192 to 212, 218 to 238, 241 to 261, 312 to 332, 348 to 368, 386 to 406, and 419 to 439; these read IFLI…WAGA, FGLT…FLVA, LLAA…LNLG, GWGI…GLLG, FLIA…ALFY, LSWI…LMNW, LIWY…SGIH, IAGV…SKIL, SLVD…NAGV, LGIL…FTLI, IIGI…ITNL, and ISIL…LLLT.

This sequence belongs to the NhaA Na(+)/H(+) (TC 2.A.33) antiporter family.

It localises to the cell inner membrane. The catalysed reaction is Na(+)(in) + 2 H(+)(out) = Na(+)(out) + 2 H(+)(in). Na(+)/H(+) antiporter that extrudes sodium in exchange for external protons. The sequence is that of Na(+)/H(+) antiporter NhaA from Christiangramia forsetii (strain DSM 17595 / CGMCC 1.15422 / KT0803) (Gramella forsetii).